The following is a 2472-amino-acid chain: Highly reducing polyketide synthase xilA (2472 aa).

A Ketosynthase family 3 (KS3) domain is found at 1–417 (MPGGVRDLPA…GTNGHCIIDD (417 aa)). Active-site for beta-ketoacyl synthase activity residues include C162, H298, and H340. Residues 442-502 (NDINGKSGTN…QRKHHHPKTD (61 aa)) form a disordered region. A compositionally biased stretch (low complexity) spans 450–489 (TNGANGANRVNGVNGVNGVNGVNGANGHSNASLLSNGSNN). The Malonyl-CoA:ACP transacylase (MAT) domain maps to 597–932 (FIFTGQGAQW…CTGTLFVHNV (336 aa)). The N-terminal hotdog fold stretch occupies residues 991–1129 (HDLLGSKVPG…GQIKVEVAKF (139 aa)). A PKS/mFAS DH domain is found at 991–1294 (HDLLGSKVPG…FTSLNNEQES (304 aa)). H1023 (proton acceptor; for dehydratase activity) is an active-site residue. The tract at residues 1141 to 1294 (GRLVDAQTWY…FTSLNNEQES (154 aa)) is C-terminal hotdog fold. D1207 (proton donor; for dehydratase activity) is an active-site residue. A methyltransferase (CMeT) domain region spans residues 1289 to 1505 (NNEQESPSTG…IITVHALRSI (217 aa)). Residues 1724–2036 (GLLTSLYFKP…KGTHIGKMVI (313 aa)) form the Enoyl reductase (ER) domain. The Ketoreductase (KR) domain maps to 2060–2239 (ASYILVGGLS…ATTVSLGFIK (180 aa)). The Carrier domain maps to 2391-2469 (ETVKLVSDAI…SIARVIVEEA (79 aa)). An O-(pantetheine 4'-phosphoryl)serine modification is found at S2428.

It depends on pantetheine 4'-phosphate as a cofactor.

Its pathway is secondary metabolite biosynthesis. Its function is as follows. Highly reducing polyketide synthase; part of the gene cluster that mediates the biosynthesis of the 6-methyl-2-pyrone derivative xylariolide D. XilA produces the 5-alkyl-6-methyl-2-pyrone backbone called prexylariolide D via sequential condensations of 4 malonyl-CoA units with one acetyl-CoA starter unit. During the biosynthesis, the linear polyketide chain is branched by the addition of an acetyl unit as the origin of the methyl group at the 2-pyrone ring. Prexylariolide D is then hydroxylated at the side chain by xilC to form the final product, xylariolide D. This is Highly reducing polyketide synthase xilA from Penicillium crustosum (Blue mold fungus).